A 373-amino-acid polypeptide reads, in one-letter code: 3 beta-hydroxysteroid dehydrogenase/Delta 5--&gt;4-isomerase type 1 (373 aa).

NADP(+) contacts are provided by residues 10 to 15, tyrosine 155, and lysine 159; that span reads GAGGFV. Lysine 159 acts as the Proton donor in catalysis. A helical transmembrane segment spans residues 288–308; it reads LPLLYWLAFLLETVSFLLRPV.

It belongs to the 3-beta-HSD family. In terms of tissue distribution, steroidogenic tissues (includes testes, ovaries and adrenal glands).

It localises to the endoplasmic reticulum membrane. Its subcellular location is the mitochondrion membrane. It catalyses the reaction a 3beta-hydroxy-Delta(5)-steroid + NAD(+) = a 3-oxo-Delta(5)-steroid + NADH + H(+). It carries out the reaction pregnenolone + NAD(+) = pregn-5-ene-3,20-dione + NADH + H(+). The enzyme catalyses 3beta-hydroxyandrost-5-en-17-one + NAD(+) = androst-5-ene-3,17-dione + NADH + H(+). The catalysed reaction is androst-5-en-3beta,17beta-diol + NAD(+) = 17beta-hydroxy-androst-5-en-3-one + NADH + H(+). It catalyses the reaction a 3beta-hydroxysteroid + NADP(+) = a 3-oxosteroid + NADPH + H(+). It carries out the reaction 5alpha-androstane-3beta,17beta-diol + NADP(+) = 17beta-hydroxy-5alpha-androstan-3-one + NADPH + H(+). The enzyme catalyses 3beta-hydroxy-5alpha-androstan-17-one + NADP(+) = 5alpha-androstan-3,17-dione + NADPH + H(+). The catalysed reaction is a 3-oxo-Delta(5)-steroid = a 3-oxo-Delta(4)-steroid. It catalyses the reaction pregn-5-ene-3,20-dione = progesterone. It carries out the reaction androst-5-ene-3,17-dione = androst-4-ene-3,17-dione. The enzyme catalyses 17beta-hydroxy-androst-5-en-3-one = testosterone. The catalysed reaction is 5alpha-androstane-3beta,17beta-diol + NAD(+) = 17beta-hydroxy-5alpha-androstan-3-one + NADH + H(+). Its pathway is steroid hormone biosynthesis. It functions in the pathway steroid metabolism. In terms of biological role, a bifunctional enzyme responsible for the oxidation and isomerization of 3beta-hydroxy-Delta(5)-steroid precursors to 3-oxo-Delta(4)-steroids, an essential step in steroid hormone biosynthesis. Specifically catalyzes the conversion of pregnenolone to progesterone, 17alpha-hydroxypregnenolone to 17alpha-hydroxyprogesterone, dehydroepiandrosterone (DHEA) to 4-androstenedione, and androstenediol to testosterone. Additionally, catalyzes the interconversion between 3beta-hydroxy and 3-oxo-5alpha-androstane steroids controlling the bioavalability of the active forms. Specifically converts dihydrotestosterone to its inactive form 5alpha-androstanediol, that does not bind androgen receptor/AR. Also converts androstanedione, a precursor of testosterone and estrone, to epiandrosterone. Expected to use NAD(+) as preferred electron donor for the 3-beta-hydroxy-steroid dehydrogenase activity and NADPH for the 3-ketosteroid reductase activity. The chain is 3 beta-hydroxysteroid dehydrogenase/Delta 5--&gt;4-isomerase type 1 from Mus musculus (Mouse).